The primary structure comprises 171 residues: Co-chaperone protein HscB (171 aa).

Residues 2–74 enclose the J domain; it reads DYFTLFGLPA…LMRAEYLLSL (73 aa).

The protein belongs to the HscB family. In terms of assembly, interacts with HscA and stimulates its ATPase activity. Interacts with IscU.

Functionally, co-chaperone involved in the maturation of iron-sulfur cluster-containing proteins. Seems to help targeting proteins to be folded toward HscA. This chain is Co-chaperone protein HscB, found in Shigella boydii serotype 18 (strain CDC 3083-94 / BS512).